An 86-amino-acid chain; its full sequence is Thioredoxin (86 aa).

Catalysis depends on nucleophile residues Cys-15 and Cys-18. Cys-15 and Cys-18 form a disulfide bridge.

Belongs to the glutaredoxin family.

Does not function as a glutathione-disulfide oxidoreductase in the presence of glutathione and glutathione reductase. Has low thioredoxin activity in vitro. The protein is Thioredoxin of Methanocaldococcus jannaschii (strain ATCC 43067 / DSM 2661 / JAL-1 / JCM 10045 / NBRC 100440) (Methanococcus jannaschii).